The following is a 309-amino-acid chain: Ubiquitin domain-containing protein UBFD1 (309 aa).

The disordered stretch occupies residues 1–80 (MAAAGAPDGM…VSNGEDAGGG (80 aa)). A compositionally biased stretch (acidic residues) spans 9-19 (GMEEPGMDTEA). The segment covering 35-57 (EAEAAAGAAAEDSGAARGSLQPA) has biased composition (low complexity). One can recognise a Ubiquitin-like domain in the interval 84 to 159 (ELVDLKIIWN…IMVVGSTIND (76 aa)). A disordered region spans residues 171 to 204 (QQDAKAEENKKEPLCRQKQHRKVLDKGKPEDVMP). Basic and acidic residues-rich tracts occupy residues 174-185 (AKAEENKKEPLC) and 192-201 (KVLDKGKPED).

In terms of assembly, binds polyubiquitin.

Functionally, may play a role as NF-kappa-B regulator. This Homo sapiens (Human) protein is Ubiquitin domain-containing protein UBFD1 (UBFD1).